A 183-amino-acid chain; its full sequence is Oligoribonuclease (183 aa).

In terms of domain architecture, Exonuclease spans Leu8 to Leu171. Residue Tyr129 is part of the active site.

The protein belongs to the oligoribonuclease family.

It is found in the cytoplasm. Functionally, 3'-to-5' exoribonuclease specific for small oligoribonucleotides. The sequence is that of Oligoribonuclease from Halorhodospira halophila (strain DSM 244 / SL1) (Ectothiorhodospira halophila (strain DSM 244 / SL1)).